A 396-amino-acid chain; its full sequence is Elongation factor Tu (396 aa).

A tr-type G domain is found at 10–206; that stretch reads KPHVNVGTIG…ALDTYIPTPE (197 aa). The interval 19–26 is G1; that stretch reads GHVDHGKT. Residue 19 to 26 coordinates GTP; sequence GHVDHGKT. Residue Thr-26 participates in Mg(2+) binding. The G2 stretch occupies residues 60-64; that stretch reads GITIN. Positions 81 to 84 are G3; it reads DCPG. GTP-binding positions include 81–85 and 136–139; these read DCPGH and NKCD. The interval 136 to 139 is G4; it reads NKCD. The segment at 174–176 is G5; sequence SAK.

Belongs to the TRAFAC class translation factor GTPase superfamily. Classic translation factor GTPase family. EF-Tu/EF-1A subfamily. As to quaternary structure, monomer.

The protein resides in the cytoplasm. It catalyses the reaction GTP + H2O = GDP + phosphate + H(+). Its function is as follows. GTP hydrolase that promotes the GTP-dependent binding of aminoacyl-tRNA to the A-site of ribosomes during protein biosynthesis. The polypeptide is Elongation factor Tu (Paraburkholderia xenovorans (strain LB400)).